Here is a 501-residue protein sequence, read N- to C-terminus: Probable pectate lyase 13 (501 aa).

The N-terminal stretch at 1–22 is a signal peptide; the sequence is MLLQNFSNTIFLLCLFFTLLSA. N-linked (GlcNAc...) asparagine glycosylation is found at Asn-27 and Asn-49. A disordered region spans residues 55 to 78; it reads RQLSSPSSSSSSSSSSSSSSCRTG. Low complexity predominate over residues 58–74; the sequence is SSPSSSSSSSSSSSSSS. Asp-217, Asp-241, and Asp-245 together coordinate Ca(2+). Arg-297 is an active-site residue. Disordered stretches follow at residues 329–359 and 408–463; these read INSQ…DGEW and NAGV…SSGD. Positions 343-357 are enriched in basic and acidic residues; sequence SAKEVTKRVDSKDDG. Gly residues predominate over residues 430-449; that stretch reads GGDGGGGGSSGGSSGGGMDV. The span at 450–463 shows a compositional bias: low complexity; sequence MGGTTRGSSSSSGD. Ser-474 carries the GPI-anchor amidated serine lipid modification. A propeptide spans 475–501 (removed in mature form); sequence DAPSRPRLTLLFSLLMISVLSLSTLLL.

It belongs to the polysaccharide lyase 1 family. It depends on Ca(2+) as a cofactor. Expressed equally in mature leaves, buds, flowers, rosettes and roots.

The protein localises to the cell membrane. It carries out the reaction Eliminative cleavage of (1-&gt;4)-alpha-D-galacturonan to give oligosaccharides with 4-deoxy-alpha-D-galact-4-enuronosyl groups at their non-reducing ends.. Its pathway is glycan metabolism; pectin degradation; 2-dehydro-3-deoxy-D-gluconate from pectin: step 2/5. Its function is as follows. Susceptibility factor required for infection by most powdery mildews, but not by unrelated pathogens. Exact function not known, but clearly affects cell wall composition. In Arabidopsis thaliana (Mouse-ear cress), this protein is Probable pectate lyase 13 (PMR6).